Here is a 300-residue protein sequence, read N- to C-terminus: Acetylglutamate kinase (300 aa).

Residues glycine 73–glycine 74, arginine 95, and asparagine 197 contribute to the substrate site.

It belongs to the acetylglutamate kinase family. ArgB subfamily.

The protein localises to the cytoplasm. The enzyme catalyses N-acetyl-L-glutamate + ATP = N-acetyl-L-glutamyl 5-phosphate + ADP. It functions in the pathway amino-acid biosynthesis; L-arginine biosynthesis; N(2)-acetyl-L-ornithine from L-glutamate: step 2/4. In terms of biological role, catalyzes the ATP-dependent phosphorylation of N-acetyl-L-glutamate. The chain is Acetylglutamate kinase from Bordetella parapertussis (strain 12822 / ATCC BAA-587 / NCTC 13253).